Reading from the N-terminus, the 498-residue chain is MTYLLALDQGTSSSRSIVFDTQGRIVASAQLELPQIYPRPGWVEHDPREIWRTQLATAREALAKAGLAAADIRALGITNQRETTVVWNRATGQPIHHAIVWQDRRAEPLCAQLREAGHADTIQRKTGLLIDAYFSGTKLRWILDNVNGARAAAERGELAFGTVDSWLIWQLTGGRRHVTDVSNASRTMLFNVHTNQWDDDLLALLEIPRALMPEVLPSAADFGRTAAEVLGGEIAIGGVAGDQQSALFGQACFSAGMAKNTYGTGCFMLMHTGGVFQTSANGLLTTAAAQPTAAPAYALEGSVFVGGAVVQWLRDGLRAIEHSGQVQQLAESVPDSGGVMMVPAFTGLGAPYWKPDARGTITGLTRGTTIAHIARAALESIAFQSAALLLAMSRDAVASGGAPVSELRVDGGACVNNLLMQFQADLLGIPVVRPACVETTALGAAYLAGLSSGVYQSTEELSALWKAERRFVPTLDKHRADELMARWEHAVAQTALAA.

ADP is bound at residue Thr-11. ATP-binding residues include Thr-11, Ser-12, and Ser-13. Thr-11 contributes to the sn-glycerol 3-phosphate binding site. Arg-15 provides a ligand contact to ADP. Sn-glycerol 3-phosphate is bound by residues Arg-81, Glu-82, Tyr-133, and Asp-242. Arg-81, Glu-82, Tyr-133, Asp-242, and Gln-243 together coordinate glycerol. The ADP site is built by Thr-264 and Gly-307. ATP contacts are provided by Thr-264, Gly-307, Gln-311, and Gly-412. ADP contacts are provided by Gly-412 and Asn-416.

This sequence belongs to the FGGY kinase family.

The enzyme catalyses glycerol + ATP = sn-glycerol 3-phosphate + ADP + H(+). It participates in polyol metabolism; glycerol degradation via glycerol kinase pathway; sn-glycerol 3-phosphate from glycerol: step 1/1. Its activity is regulated as follows. Inhibited by fructose 1,6-bisphosphate (FBP). In terms of biological role, key enzyme in the regulation of glycerol uptake and metabolism. Catalyzes the phosphorylation of glycerol to yield sn-glycerol 3-phosphate. This Delftia acidovorans (strain DSM 14801 / SPH-1) protein is Glycerol kinase.